A 422-amino-acid chain; its full sequence is Probable zinc-type alcohol dehydrogenase-like protein L498 (422 aa).

The Zn(2+) site is built by C108, H129, C160, C163, C166, C174, and C231.

Zn(2+) serves as cofactor.

It is found in the host cytoplasm. The protein localises to the virion. In Acanthamoeba polyphaga (Amoeba), this protein is Probable zinc-type alcohol dehydrogenase-like protein L498.